Here is a 288-residue protein sequence, read N- to C-terminus: Hypersensitive-induced response protein-like protein 1 (288 aa).

Residue Gly-2 is the site of N-myristoyl glycine attachment.

Positive regulator of hypersensitive response (HR)-like cell death. May be involved in potassium ion channel regulation. This is Hypersensitive-induced response protein-like protein 1 from Oryza sativa subsp. japonica (Rice).